The sequence spans 381 residues: Phospholipid scramblase family protein C343.06c (381 aa).

Positions 336–369 (QEILKNDQETTPSTNDSSSETKSPFLSDADLDQQ) are disordered. Over residues 344–359 (ETTPSTNDSSSETKSP) the composition is skewed to polar residues.

The protein belongs to the phospholipid scramblase family.

It localises to the mitochondrion. This is Phospholipid scramblase family protein C343.06c from Schizosaccharomyces pombe (strain 972 / ATCC 24843) (Fission yeast).